Here is an 89-residue protein sequence, read N- to C-terminus: Small ribosomal subunit protein uS15 (89 aa).

The protein belongs to the universal ribosomal protein uS15 family. As to quaternary structure, part of the 30S ribosomal subunit. Forms a bridge to the 50S subunit in the 70S ribosome, contacting the 23S rRNA.

Its function is as follows. One of the primary rRNA binding proteins, it binds directly to 16S rRNA where it helps nucleate assembly of the platform of the 30S subunit by binding and bridging several RNA helices of the 16S rRNA. Forms an intersubunit bridge (bridge B4) with the 23S rRNA of the 50S subunit in the ribosome. The protein is Small ribosomal subunit protein uS15 of Psychromonas ingrahamii (strain DSM 17664 / CCUG 51855 / 37).